The following is a 323-amino-acid chain: Solute carrier family 35 member B1 (323 aa).

8 consecutive transmembrane segments (helical) span residues 15–35 (LVCF…QETI), 51–71 (FALS…KLLI), 85–105 (WLYA…NSAL), 136–156 (YPLS…LFMY), 169–189 (TFGY…LTGV), 205–225 (MMLY…VFTG), 253–273 (LGQT…CSII), and 286–306 (VILF…LVFL). A Di-lysine motif motif is present at residues 319-323 (KKPSH).

The protein belongs to the nucleotide-sugar transporter family. SLC35B subfamily.

Its subcellular location is the endoplasmic reticulum membrane. Probable sugar transporter. This chain is Solute carrier family 35 member B1 (slc35b1), found in Xenopus tropicalis (Western clawed frog).